Consider the following 1278-residue polypeptide: SMC5-SMC6 complex localization factor protein 2 (1278 aa).

Disordered stretches follow at residues 1–235, 248–337, 443–491, and 509–582; these read MTRR…LGAR, EQKK…KRTE, RINS…FIRH, and EPED…KETK. Residues 39 to 50 show a composition bias toward basic and acidic residues; the sequence is KRTESPGDRKQS. Positions 94–103 are enriched in basic residues; that stretch reads SSPKKLKPKR. Composition is skewed to basic and acidic residues over residues 118–133, 156–174, 180–199, and 248–258; these read GGKE…ESRR, LPKE…ERRK, ESNR…DSRK, and EQKKLRKEQME. Composition is skewed to polar residues over residues 259 to 277 and 318 to 329; these read QRIN…SLKS and SDSWELSGSKQN. 2 stretches are compositionally biased toward basic and acidic residues: residues 449–463 and 469–489; these read KEQR…KSTK and KARE…EKFI. Positions 519-540 are enriched in polar residues; that stretch reads ADSAPSNAGHHSSRNSDQVHSA. Position 591 is a phosphoserine (Ser591). Disordered stretches follow at residues 598–724, 739–764, and 798–820; these read PLNA…EEEE, RTPT…MKEY, and IRQG…DDGD. Over residues 609-630 the composition is skewed to basic and acidic residues; it reads PKKDKERSSSKERSGHSTESSK. 3 stretches are compositionally biased toward low complexity: residues 643–654, 666–675, and 688–697; these read SNESSGKNSGGS, PPAALEVVPS, and SGNSNAGSNA. Acidic residues predominate over residues 707–724; the sequence is DSDEESLGYTLESDEEEE. Phosphoserine is present on residues Ser708, Ser712, and Ser719. Residues 740–1278 form an interaction with SIMC1 region; it reads TPTTSGKPPA…QLHDFWVPDS (539 aa). The tract at residues 769–1271 is NSE6-like domain; the sequence is TYTNTLERLV…NCRPTQGQLH (503 aa). Residues 807–1278 are required for interaction with SLF1 and RAD18; it reads PLRTGDQDST…QLHDFWVPDS (472 aa).

It belongs to the FAM178 family. As to quaternary structure, forms a heterodimer with SIMC1. Interacts with SLF1 (via N-terminus); this interaction links RAD18 to the SMC5-SMC6 complex. Interacts with RAD18; this interaction is increased in a SLF1-dependent manner. Interacts with SMC5 and SMC6.

The protein localises to the nucleus. The protein resides in the PML body. In terms of biological role, plays a role in the DNA damage response (DDR) pathway by regulating postreplication repair of UV-damaged DNA and genomic stability maintenance. The SLF1-SLF2 complex acts to link RAD18 with the SMC5-SMC6 complex at replication-coupled interstrand cross-links (ICL) and DNA double-strand breaks (DSBs) sites on chromatin during DNA repair in response to stalled replication forks. Promotes the recruitment of the SMC5-SMC6 complex to DNA lesions. May play a role in SMC5-SMC6 complex recruitment for viral restriction. Forms a complex with SIMC1 and this complex is required to recruit SMC5-SMC6 complex to PML nuclear bodies and sites of viral replication. This is SMC5-SMC6 complex localization factor protein 2 from Mus musculus (Mouse).